A 351-amino-acid polypeptide reads, in one-letter code: Basic salivary proline-rich protein 3 (351 aa).

The N-terminal stretch at 1–16 is a signal peptide; it reads MLLILLSVALLALSSA. Pyrrolidone carboxylic acid is present on Gln17. Residues 17–351 are disordered; sequence QSLNEDVSQE…HRPPQGQPPQ (335 aa). Residues 20–31 are compositionally biased toward polar residues; that stretch reads NEDVSQEESPSV. Ser24 is modified (phosphoserine). A run of 12 repeats spans residues 53–73, 74–94, 95–115, 116–136, 137–157, 158–178, 179–199, 200–220, 221–241, 242–261, 263–283, and 284–304. The interval 53–304 is 12 X 21 AA tandem repeats of [RHP]-P-G-K-P-[EQ]-G-[PQS]-P-[PS]-Q-[GE]-G-N-[QK]-[SP]-[QR]-[GR]-P-P-P; sequence PPGKPEGRPP…EGNKPQRPPP (252 aa). Asn66 is a glycosylation site (N-linked (GlcNAc...) asparagine). A compositionally biased stretch (pro residues) spans 70-84; the sequence is GPPPRPGKPEGPPPQ. Asn87 is a glycosylation site (N-linked (GlcNAc...) asparagine). Residue Ser89 is glycosylated (O-linked (Hex) serine). Positions 99-111 are enriched in low complexity; the sequence is PEGQPPQGGNQSQ. Asn108 carries N-linked (GlcNAc...) asparagine glycosylation. Pro residues predominate over residues 112-126; the sequence is GPPPRPGKPEGPPPQ. The N-linked (GlcNAc...) asparagine glycan is linked to Asn129. The segment covering 133–147 has biased composition (pro residues); sequence GPPPRPGKPEGPPPQ. Asn150 carries an N-linked (GlcNAc...) asparagine glycan. 2 stretches are compositionally biased toward pro residues: residues 154–168 and 175–189; these read GPPP…PPPQ. A glycan (N-linked (GlcNAc...) asparagine) is linked at Asn192. The segment covering 196 to 210 has biased composition (pro residues); the sequence is GPPPRPGKPEGPPPQ. N-linked (GlcNAc...) asparagine glycans are attached at residues Asn213 and Asn234. Composition is skewed to pro residues over residues 217–252, 259–270, and 279–351; these read GPPP…PPPQ, GPPPRPGKPEGP, and QGPP…QPPQ. Asn297 is a glycosylation site (N-linked (Hex) asparagine; atypical).

N- and O-glycosylated; contains about 50% carbohydrate. This is composed of highly fucosylated N-linked saccharides, the major structure is a biantennary asialosaccharide containing 2 fucose residues on one antenna and an unsubstituted terminal lactosamine sequence on the other. The Gram-negative bacterium F.nucleatum binds to carbohydrates containing unsubstituted GalBeta1,4GlcNAc residues. N-glycosylation on Asn-87 is prevalent in head and neck cancer patients. In terms of processing, proteolytically cleaved at the tripeptide Xaa-Pro-Gln, where Xaa in the P(3) position is mostly lysine. The endoprotease may be of microbial origin. Besides on the N-terminal of mature PRB3, pyroglutamate formation found on at least Gln-67, Gln-88, Gln-256 and Gln-337.

It localises to the secreted. Acts as a receptor for the Gram-negative bacterium F.nucleatum. In Homo sapiens (Human), this protein is Basic salivary proline-rich protein 3 (PRB3).